We begin with the raw amino-acid sequence, 239 residues long: Succinate dehydrogenase [ubiquinone] iron-sulfur subunit (239 aa).

Residues 24–99 (AEAKFSVHPI…NANIITIYPL (76 aa)) form the 2Fe-2S ferredoxin-type domain. The [2Fe-2S] cluster site is built by C63, C68, C71, and C83. The 31-residue stretch at 142–172 (DRSELNGIYECILCACCSASCPSYWWNHDKY) folds into the 4Fe-4S ferredoxin-type domain. Residues C152, C155, and C158 each contribute to the [4Fe-4S] cluster site. C162 serves as a coordination point for [3Fe-4S] cluster. W167 contacts a ubiquinone. Residues C209 and C215 each contribute to the [3Fe-4S] cluster site. C219 is a [4Fe-4S] cluster binding site.

The protein belongs to the succinate dehydrogenase/fumarate reductase iron-sulfur protein family. As to quaternary structure, component of complex II composed of four subunits: a flavoprotein (FP), an iron-sulfur protein (IP), and a cytochrome b composed of a large and a small subunit. It depends on [2Fe-2S] cluster as a cofactor. [3Fe-4S] cluster is required as a cofactor. Requires [4Fe-4S] cluster as cofactor.

Its subcellular location is the mitochondrion inner membrane. It catalyses the reaction a quinone + succinate = fumarate + a quinol. Its pathway is carbohydrate metabolism; tricarboxylic acid cycle; fumarate from succinate (eukaryal route): step 1/1. Functionally, iron-sulfur protein (IP) subunit of succinate dehydrogenase (SDH) that is involved in complex II of the mitochondrial electron transport chain and is responsible for transferring electrons from succinate to ubiquinone (coenzyme Q). This chain is Succinate dehydrogenase [ubiquinone] iron-sulfur subunit (SDH2), found in Porphyra purpurea (Red seaweed).